Reading from the N-terminus, the 130-residue chain is Small ribosomal subunit protein uS8 (130 aa).

N6-succinyllysine is present on Lys-88.

The protein belongs to the universal ribosomal protein uS8 family. In terms of assembly, component of the small ribosomal subunit. Part of the small subunit (SSU) processome, composed of more than 70 proteins and the RNA chaperone small nucleolar RNA (snoRNA) U3.

It is found in the cytoplasm. It localises to the nucleus. The protein resides in the nucleolus. In terms of biological role, component of the small ribosomal subunit. The ribosome is a large ribonucleoprotein complex responsible for the synthesis of proteins in the cell. Part of the small subunit (SSU) processome, first precursor of the small eukaryotic ribosomal subunit. During the assembly of the SSU processome in the nucleolus, many ribosome biogenesis factors, an RNA chaperone and ribosomal proteins associate with the nascent pre-rRNA and work in concert to generate RNA folding, modifications, rearrangements and cleavage as well as targeted degradation of pre-ribosomal RNA by the RNA exosome. Required for proper erythropoiesis. This chain is Small ribosomal subunit protein uS8 (Rps15a), found in Mus musculus (Mouse).